Consider the following 273-residue polypeptide: Ribosomal RNA small subunit methyltransferase A (273 aa).

Residues Asn18, Leu20, Gly45, Glu66, Asp91, and Asn113 each contribute to the S-adenosyl-L-methionine site.

This sequence belongs to the class I-like SAM-binding methyltransferase superfamily. rRNA adenine N(6)-methyltransferase family. RsmA subfamily.

Its subcellular location is the cytoplasm. It catalyses the reaction adenosine(1518)/adenosine(1519) in 16S rRNA + 4 S-adenosyl-L-methionine = N(6)-dimethyladenosine(1518)/N(6)-dimethyladenosine(1519) in 16S rRNA + 4 S-adenosyl-L-homocysteine + 4 H(+). Its function is as follows. Specifically dimethylates two adjacent adenosines (A1518 and A1519) in the loop of a conserved hairpin near the 3'-end of 16S rRNA in the 30S particle. May play a critical role in biogenesis of 30S subunits. The polypeptide is Ribosomal RNA small subunit methyltransferase A (Salmonella typhimurium (strain LT2 / SGSC1412 / ATCC 700720)).